The primary structure comprises 161 residues: Crossover junction endodeoxyribonuclease RuvC (161 aa).

Catalysis depends on residues D8, E67, and D139. Mg(2+) contacts are provided by D8, E67, and D139.

The protein belongs to the RuvC family. Homodimer which binds Holliday junction (HJ) DNA. The HJ becomes 2-fold symmetrical on binding to RuvC with unstacked arms; it has a different conformation from HJ DNA in complex with RuvA. In the full resolvosome a probable DNA-RuvA(4)-RuvB(12)-RuvC(2) complex forms which resolves the HJ. Requires Mg(2+) as cofactor.

The protein resides in the cytoplasm. The enzyme catalyses Endonucleolytic cleavage at a junction such as a reciprocal single-stranded crossover between two homologous DNA duplexes (Holliday junction).. The RuvA-RuvB-RuvC complex processes Holliday junction (HJ) DNA during genetic recombination and DNA repair. Endonuclease that resolves HJ intermediates. Cleaves cruciform DNA by making single-stranded nicks across the HJ at symmetrical positions within the homologous arms, yielding a 5'-phosphate and a 3'-hydroxyl group; requires a central core of homology in the junction. The consensus cleavage sequence is 5'-(A/T)TT(C/G)-3'. Cleavage occurs on the 3'-side of the TT dinucleotide at the point of strand exchange. HJ branch migration catalyzed by RuvA-RuvB allows RuvC to scan DNA until it finds its consensus sequence, where it cleaves and resolves the cruciform DNA. In Wigglesworthia glossinidia brevipalpis, this protein is Crossover junction endodeoxyribonuclease RuvC.